Reading from the N-terminus, the 424-residue chain is QQRYLNAKRYVKLAIVADRSMVTKHNGKLKKLRKWIYRIVNTINEVYRSLNILVALVYLEIWSKEDLINVTSAAKDTLASFGNWRATDLLKRRSHDAAHLLTNIKFDGTTVGKAYVASMCQQDSSVGINQDHSKINLLVALTMAHELGHNLGMSHDVVNTEKQCNCGTCVMAPTISDQISKLFSNCSKNDYENFLTLYKPQCILNEPSKTDIVSPPVCGNELLEVGEECDCGSPETCQNPCCDAATCKLTSGSQCAKGLCCDQCKFSKSGTECRAAKDDCDIAESCTGQSADCPTDDLQRNGKPCQNNAGYCYNGKCPIMLNQCISFYGSNATVAPDICFNYNLKGEGNFYCRKEQATIFPCAQKDKKCGRLFCVLGPTGKRISCKNTYSEDDPNYGMVDLGTKCEDGKVCNSNRECVDVNTAY.

Glutamine 1 carries the post-translational modification Pyrrolidone carboxylic acid. The Peptidase M12B domain maps to 9–207 (RYVKLAIVAD…YKPQCILNEP (199 aa)). The N-linked (GlcNAc...) asparagine glycan is linked to asparagine 69. Aspartate 96 is a Ca(2+) binding site. 3 disulfide bridges follow: cysteine 120–cysteine 202, cysteine 164–cysteine 186, and cysteine 166–cysteine 169. Histidine 145 contributes to the Zn(2+) binding site. Residue glutamate 146 is part of the active site. Zn(2+) contacts are provided by histidine 149 and histidine 155. Asparagine 185 carries N-linked (GlcNAc...) asparagine glycosylation. 8 residues coordinate Ca(2+): cysteine 202, asparagine 205, valine 217, asparagine 220, leucine 222, glutamate 224, glutamate 227, and aspartate 230. In terms of domain architecture, Disintegrin spans 215–301 (PPVCGNELLE…DCPTDDLQRN (87 aa)). 14 cysteine pairs are disulfide-bonded: cysteine 218–cysteine 247, cysteine 229–cysteine 242, cysteine 231–cysteine 237, cysteine 241–cysteine 264, cysteine 255–cysteine 261, cysteine 260–cysteine 286, cysteine 273–cysteine 293, cysteine 280–cysteine 312, cysteine 305–cysteine 317, cysteine 324–cysteine 374, cysteine 339–cysteine 385, cysteine 352–cysteine 362, cysteine 369–cysteine 411, and cysteine 405–cysteine 417. Residues 279–281 (DCD) carry the D/ECD-tripeptide motif. Ca(2+) is bound by residues aspartate 281, glutamate 284, and aspartate 296. An N-linked (GlcNAc...) asparagine glycan is attached at asparagine 331.

Belongs to the venom metalloproteinase (M12B) family. P-III subfamily. P-IIIa sub-subfamily. As to quaternary structure, monomer. The cofactor is Zn(2+). Glycosylated. Expressed by the venom gland.

The protein resides in the secreted. With respect to regulation, its proteolytic activity is inhibited by EDTA, TPEN, 1,10-phenanthroline, and some thiol compounds, but is enhanced by alkaline earth metal ions (Mg2+, Ca2+, Sr2+, and Ba2+). Its activity is not modulated by urea (4 M). Non-hemorrhagic metalloproteinase that degrades fibrinogen. The alpha chain (FGA) is rapidly degraded, the beta chain (FGB) is degraded very slowly, while the gamma chain is left intact. Shows a prefential cleavage at X-Leu bonds. Cleaves insulin B chain at '29-His-|-Leu-30', '33-Ser-|-His-34', '38-Ala-|-Leu-39' and '40-Tyr-|-Leu-41' bonds. The sequence is that of Zinc metalloproteinase-disintegrin-like brevilysin H2a from Gloydius brevicauda (Korean slamosa snake).